We begin with the raw amino-acid sequence, 160 residues long: Transcription elongation factor GreA (160 aa).

Positions 1–31 form a coiled coil; that stretch reads MAEKTYPMTLEEKEKLEKELEELKLVRRPEI.

This sequence belongs to the GreA/GreB family.

Its function is as follows. Necessary for efficient RNA polymerase transcription elongation past template-encoded arresting sites. The arresting sites in DNA have the property of trapping a certain fraction of elongating RNA polymerases that pass through, resulting in locked ternary complexes. Cleavage of the nascent transcript by cleavage factors such as GreA or GreB allows the resumption of elongation from the new 3'terminus. GreA releases sequences of 2 to 3 nucleotides. This chain is Transcription elongation factor GreA, found in Streptococcus suis (strain 98HAH33).